The following is a 110-amino-acid chain: Cuticle protein 13 (110 aa).

This chain is Cuticle protein 13, found in Limulus polyphemus (Atlantic horseshoe crab).